The sequence spans 215 residues: UPF0502 protein YceH (215 aa).

Residue K80 is modified to N6-acetyllysine.

This sequence belongs to the UPF0502 family.

In Escherichia coli O81 (strain ED1a), this protein is UPF0502 protein YceH.